The chain runs to 218 residues: MNRQKVIAIDGPGASGKGTVAARVAAALGYDYLDTGALYRLTALYAQKQGVGWHDEENVSELAKKLPAVFSDSRILLGGEDVSDGIRTEAIGMGASAVAQLPKVRASLLQRQRDFLTEKGLVADGRDTGSVVFPQAELKIFLTAESKIRAERRAKQIGIPCEGLAFERILSDIEARDEADRNRKVAPLKQQPDALLLDTSRLTIEETVKKVLDWYRKV.

11–19 (GPGASGKGT) contributes to the ATP binding site.

It belongs to the cytidylate kinase family. Type 1 subfamily.

It is found in the cytoplasm. The enzyme catalyses CMP + ATP = CDP + ADP. It catalyses the reaction dCMP + ATP = dCDP + ADP. This Neisseria meningitidis serogroup A / serotype 4A (strain DSM 15465 / Z2491) protein is Cytidylate kinase.